We begin with the raw amino-acid sequence, 37 residues long: MKVQPSVKRICDKCQVVRRKGRVLVICSNPRHKQRQG.

The protein belongs to the bacterial ribosomal protein bL36 family.

This chain is Large ribosomal subunit protein bL36, found in Micrococcus luteus (strain ATCC 4698 / DSM 20030 / JCM 1464 / CCM 169 / CCUG 5858 / IAM 1056 / NBRC 3333 / NCIMB 9278 / NCTC 2665 / VKM Ac-2230) (Micrococcus lysodeikticus).